Consider the following 273-residue polypeptide: Large ribosomal subunit protein uL2 (273 aa).

Disordered regions lie at residues 28-53 (KPFAPLLEKNSKSGGRNNNGRITTRH) and 221-273 (RGTA…RRSK). The span at 39 to 48 (KSGGRNNNGR) shows a compositional bias: low complexity. N6-acetyllysine is present on K242.

Belongs to the universal ribosomal protein uL2 family. In terms of assembly, part of the 50S ribosomal subunit. Forms a bridge to the 30S subunit in the 70S ribosome.

One of the primary rRNA binding proteins. Required for association of the 30S and 50S subunits to form the 70S ribosome, for tRNA binding and peptide bond formation. It has been suggested to have peptidyltransferase activity; this is somewhat controversial. Makes several contacts with the 16S rRNA in the 70S ribosome. The sequence is that of Large ribosomal subunit protein uL2 from Shigella dysenteriae serotype 1 (strain Sd197).